Reading from the N-terminus, the 652-residue chain is ATP-dependent zinc metalloprotease FtsH 2 (652 aa).

Residues 1–6 (MNKYRR) are Cytoplasmic-facing. The chain crosses the membrane as a helical span at residues 7 to 27 (GLALGALALAVFILIGVGISM). Over 28 to 108 (RATPQPVNLT…PAGNGAISAD (81 aa)) the chain is Extracellular. Residues 109–129 (LMLLLRILTIVAVGVVIFVLF) form a helical membrane-spanning segment. The Cytoplasmic portion of the chain corresponds to 130-652 (RRFGPSSIGT…RAAKPQIDRT (523 aa)). 200–207 (GPPGTGKT) lines the ATP pocket. His-420 provides a ligand contact to Zn(2+). The active site involves Glu-421. Residues His-424 and Asp-496 each contribute to the Zn(2+) site.

In the central section; belongs to the AAA ATPase family. The protein in the C-terminal section; belongs to the peptidase M41 family. Homohexamer. Requires Zn(2+) as cofactor.

Its subcellular location is the cell membrane. Functionally, acts as a processive, ATP-dependent zinc metallopeptidase for both cytoplasmic and membrane proteins. Plays a role in the quality control of integral membrane proteins. The sequence is that of ATP-dependent zinc metalloprotease FtsH 2 from Sphaerobacter thermophilus (strain ATCC 49802 / DSM 20745 / KCCM 41009 / NCIMB 13125 / S 6022).